The sequence spans 271 residues: Repressed by EFG1 protein 1 (271 aa).

The first 19 residues, 1 to 19 (MKITNTLLNAAALLAVTEA), serve as a signal peptide directing secretion. The tract at residues 59–118 (QLTSKTQDSTSPTTSSVNSLTSSSATSYVETTTPAPSSSTLTTSTISSSTASEDSDATPT) is disordered. Residues 67 to 118 (STSPTTSSVNSLTSSSATSYVETTTPAPSSSTLTTSTISSSTASEDSDATPT) show a composition bias toward low complexity. The SCP domain occupies 128-244 (LKEHNVKRAL…AWRQITVCEY (117 aa)). A glycan (N-linked (GlcNAc...) asparagine) is linked at Asn-254.

The protein belongs to the CRISP family.

It localises to the secreted. The protein localises to the cell wall. Cell wall protein involved in cell wall integrity and which plays a role in virulence. The sequence is that of Repressed by EFG1 protein 1 (RBE1) from Candida albicans (strain SC5314 / ATCC MYA-2876) (Yeast).